The following is a 103-amino-acid chain: Ribonuclease VapC14 (103 aa).

The PINc domain occupies 3–74; sequence YVLDTNVVSA…WFDDKVLRIF (72 aa). A Mg(2+)-binding site is contributed by Asp6.

Belongs to the PINc/VapC protein family. It depends on Mg(2+) as a cofactor.

In terms of biological role, toxic component of a type II toxin-antitoxin (TA) system. An RNase. The cognate antitoxin is VapB14. This chain is Ribonuclease VapC14 (vapC14), found in Mycobacterium tuberculosis (strain CDC 1551 / Oshkosh).